Here is a 171-residue protein sequence, read N- to C-terminus: ATP synthase subunit b (171 aa).

Residues 4–24 (IAFFVICVGFPSLIFASASIQ) traverse the membrane as a helical segment.

The protein belongs to the ATPase B chain family. F-type ATPases have 2 components, F(1) - the catalytic core - and F(0) - the membrane proton channel. F(1) has five subunits: alpha(3), beta(3), gamma(1), delta(1), epsilon(1). F(0) has three main subunits: a(1), b(2) and c(10-14). The alpha and beta chains form an alternating ring which encloses part of the gamma chain. F(1) is attached to F(0) by a central stalk formed by the gamma and epsilon chains, while a peripheral stalk is formed by the delta and b chains.

Its subcellular location is the cell inner membrane. Functionally, f(1)F(0) ATP synthase produces ATP from ADP in the presence of a proton or sodium gradient. F-type ATPases consist of two structural domains, F(1) containing the extramembraneous catalytic core and F(0) containing the membrane proton channel, linked together by a central stalk and a peripheral stalk. During catalysis, ATP synthesis in the catalytic domain of F(1) is coupled via a rotary mechanism of the central stalk subunits to proton translocation. Component of the F(0) channel, it forms part of the peripheral stalk, linking F(1) to F(0). The protein is ATP synthase subunit b of Helicobacter hepaticus (strain ATCC 51449 / 3B1).